The sequence spans 106 residues: Immunity protein CdiI (106 aa).

In terms of assembly, forms a contact-dependent growth inhibition complex of CdiA-CT-NC101, CdiI-NC101 and EF-Tu; the complex is a dimer of heterotrimers.

Functionally, immunity protein component of a toxin-immunity protein module, which functions as a cellular contact-dependent growth inhibition (CDI) system. CDI modules allow bacteria to communicate with and inhibit the growth of closely related neighboring bacteria in a contact-dependent fashion. Neutralizes the toxic activity of cognate toxin CdiA-NC101 (the C-terminal 154 residue CT fragment). Does not inhibit toxic activity of CdiA from other toxin-immunity modules or strains of E.coli. Mediates dimerization of the ternary CdiA-CT-NC101, CdiI-NC101 and EF-Tu complex; both CdiI molecules contact both EF-Tu molecules. The polypeptide is Immunity protein CdiI (Escherichia coli (strain NC101)).